Reading from the N-terminus, the 195-residue chain is ATP-dependent Clp protease proteolytic subunit (195 aa).

Catalysis depends on serine 98, which acts as the Nucleophile. Residue histidine 123 is part of the active site.

This sequence belongs to the peptidase S14 family. Fourteen ClpP subunits assemble into 2 heptameric rings which stack back to back to give a disk-like structure with a central cavity, resembling the structure of eukaryotic proteasomes.

The protein localises to the cytoplasm. It carries out the reaction Hydrolysis of proteins to small peptides in the presence of ATP and magnesium. alpha-casein is the usual test substrate. In the absence of ATP, only oligopeptides shorter than five residues are hydrolyzed (such as succinyl-Leu-Tyr-|-NHMec, and Leu-Tyr-Leu-|-Tyr-Trp, in which cleavage of the -Tyr-|-Leu- and -Tyr-|-Trp bonds also occurs).. Cleaves peptides in various proteins in a process that requires ATP hydrolysis. Has a chymotrypsin-like activity. Plays a major role in the degradation of misfolded proteins. The sequence is that of ATP-dependent Clp protease proteolytic subunit from Staphylococcus aureus (strain Mu3 / ATCC 700698).